The primary structure comprises 166 residues: NAD(P)H-quinone oxidoreductase subunit I, chloroplastic (166 aa).

2 4Fe-4S ferredoxin-type domains span residues 55–84 (GRIHFEFDKCIACEVCVRVCPIDLPVVDWK) and 95–124 (LNYSIDFGICIFCGNCVEYCPTNCLSMTEE). [4Fe-4S] cluster contacts are provided by C64, C67, C70, C74, C104, C107, C110, and C114.

This sequence belongs to the complex I 23 kDa subunit family. In terms of assembly, NDH is composed of at least 16 different subunits, 5 of which are encoded in the nucleus. [4Fe-4S] cluster is required as a cofactor.

Its subcellular location is the plastid. The protein resides in the chloroplast thylakoid membrane. It carries out the reaction a plastoquinone + NADH + (n+1) H(+)(in) = a plastoquinol + NAD(+) + n H(+)(out). The enzyme catalyses a plastoquinone + NADPH + (n+1) H(+)(in) = a plastoquinol + NADP(+) + n H(+)(out). NDH shuttles electrons from NAD(P)H:plastoquinone, via FMN and iron-sulfur (Fe-S) centers, to quinones in the photosynthetic chain and possibly in a chloroplast respiratory chain. The immediate electron acceptor for the enzyme in this species is believed to be plastoquinone. Couples the redox reaction to proton translocation, and thus conserves the redox energy in a proton gradient. The chain is NAD(P)H-quinone oxidoreductase subunit I, chloroplastic from Melampodium leucanthum (Black foot daisy).